Consider the following 741-residue polypeptide: MSTPKIIYTLTDEAPALATYSLLPIIKAFTGSSGIAVETRDISLAGRLIATFPEYLTDTQKISDDLAELGKLATTPDANIIKLPNISASVPQLKAAIKELQQQGYKLPDYPEEPKTDTEKDVKARYDKIKGSAVNPVLREGNSDRRAPLSVKNYARKHPHKMGAWSADSKSHVAHMDNGDFYGSEKAALIGAPGSVKIELIAKDGSSTVLKAKTSVQAGEIIDSSVMSKNALRNFIAAEIEDAKKQGVLLSVHLKATMMKVSDPIMFGQIVSEFYKDALTKHAEVLKQIGFDVNNGIGDLYARIKTLPEAKQKEIEADIQAVYAQRPQLAMVNSDKGITNLHVPSDVIVDASMPAMIRDSGKMWGPDGKLHDTKAVIPDRCYAGVYQVVIEDCKQHGAFDPTTMGSVPNVGLMAQKAEEYGSHDKTFQIPADGVVRVTDESGKLLLEQSVEAGDIWRMCQAKDAPIQDWVKLAVNRARATNTPAVFWLDPARAHDAQVIAKVERYLKDYDTSGLDIRILSPVEATRFSLARIREGKDTISVTGNVLRDYLTDLFPIMELGTSAKMLSIVPLMSGGGLFETGAGGSAPKHVQQFLEEGYLRWDSLGEFLALAASLEHLGNAYKNPKALVLASTLDQATGKILDNNKSPARKVGEIDNRGSHFYLALYWAQALAAQTEDKELQAQFTGIAKALTDNETKIVGELAAAQGKPVDIAGYYHPNTDLTSKAIRPSATFNAALAPLA.

Residues Asn-85 and Ser-87 each coordinate NADP(+). Residues Ser-132, Asn-135, Arg-139, Arg-145, and Lys-255 each coordinate D-threo-isocitrate. NADP(+) is bound at residue Asn-135. Residue Asp-350 coordinates Mn(2+). 2 residues coordinate D-threo-isocitrate: Tyr-420 and Arg-547. Residue Asp-548 participates in Mn(2+) binding. The NADP(+) site is built by Ser-585, His-589, Arg-600, Asp-602, and Arg-649.

It belongs to the monomeric-type IDH family. In terms of assembly, monomer. Mg(2+) serves as cofactor. Mn(2+) is required as a cofactor.

The protein localises to the cytoplasm. It carries out the reaction D-threo-isocitrate + NADP(+) = 2-oxoglutarate + CO2 + NADPH. Its activity is regulated as follows. Activity is inhibited in the presence of Ca(2+). Catalyzes the oxidative decarboxylation of isocitrate to 2-oxoglutarate and carbon dioxide with the concomitant reduction of NADP(+). The sequence is that of Isocitrate dehydrogenase [NADP] from Azotobacter vinelandii.